Here is a 192-residue protein sequence, read N- to C-terminus: Iron sulfur cluster assembly protein 1, mitochondrial (192 aa).

Residues 1–53 constitute a mitochondrion transit peptide; that stretch reads MSVFRRSVQCVGVLPSILAQRSSLLARPANLQFLKTNSSKFVPQVTANVSRRM.

It belongs to the NifU family. Homodimer. Component of the core Fe-S cluster (ISC) assembly machinery. Requires [2Fe-2S] cluster as cofactor.

The protein localises to the mitochondrion. It localises to the mitochondrion matrix. It functions in the pathway cofactor biosynthesis; iron-sulfur cluster biosynthesis. Its function is as follows. Scaffold protein for the de novo synthesis of iron-sulfur (Fe-S) clusters within mitochondria, which is required for maturation of both mitochondrial and cytoplasmic [2Fe-2S] and [4Fe-4S] proteins. First, a [2Fe-2S] cluster is transiently assembled on the scaffold protein isu1. In a second step, the cluster is released from isu1, transferred to a glutaredoxin, followed by the formation of mitochondrial [2Fe-2S] proteins, the synthesis of [4Fe-4S] clusters and their target-specific insertion into the recipient apoproteins. Cluster assembly on isu1 depends on the function of the cysteine desulfurase complex nfs1-isd11, which serves as the sulfur donor for cluster synthesis, the iron-binding protein frataxin as the putative iron donor, and the electron transfer chain comprised of ferredoxin reductase and ferredoxin, which receive their electrons from NADH. The protein is Iron sulfur cluster assembly protein 1, mitochondrial (isu1) of Schizosaccharomyces pombe (strain 972 / ATCC 24843) (Fission yeast).